The chain runs to 311 residues: Porphobilinogen deaminase (311 aa).

Cys242 carries the S-(dipyrrolylmethanemethyl)cysteine modification.

This sequence belongs to the HMBS family. As to quaternary structure, monomer. It depends on dipyrromethane as a cofactor.

It catalyses the reaction 4 porphobilinogen + H2O = hydroxymethylbilane + 4 NH4(+). Its pathway is porphyrin-containing compound metabolism; protoporphyrin-IX biosynthesis; coproporphyrinogen-III from 5-aminolevulinate: step 2/4. In terms of biological role, tetrapolymerization of the monopyrrole PBG into the hydroxymethylbilane pre-uroporphyrinogen in several discrete steps. The polypeptide is Porphobilinogen deaminase (hemC) (Neisseria meningitidis serogroup B (strain ATCC BAA-335 / MC58)).